A 341-amino-acid polypeptide reads, in one-letter code: S-adenosylmethionine:tRNA ribosyltransferase-isomerase (341 aa).

The protein belongs to the QueA family. Monomer.

The protein resides in the cytoplasm. It carries out the reaction 7-aminomethyl-7-carbaguanosine(34) in tRNA + S-adenosyl-L-methionine = epoxyqueuosine(34) in tRNA + adenine + L-methionine + 2 H(+). It participates in tRNA modification; tRNA-queuosine biosynthesis. Functionally, transfers and isomerizes the ribose moiety from AdoMet to the 7-aminomethyl group of 7-deazaguanine (preQ1-tRNA) to give epoxyqueuosine (oQ-tRNA). The polypeptide is S-adenosylmethionine:tRNA ribosyltransferase-isomerase (Staphylococcus saprophyticus subsp. saprophyticus (strain ATCC 15305 / DSM 20229 / NCIMB 8711 / NCTC 7292 / S-41)).